The primary structure comprises 206 residues: Small ribosomal subunit protein uS4 (206 aa).

An S4 RNA-binding domain is found at 96–156; it reads CRLDNVVYRM…EKAKNQLRIA (61 aa).

Belongs to the universal ribosomal protein uS4 family. As to quaternary structure, part of the 30S ribosomal subunit. Contacts protein S5. The interaction surface between S4 and S5 is involved in control of translational fidelity.

Its function is as follows. One of the primary rRNA binding proteins, it binds directly to 16S rRNA where it nucleates assembly of the body of the 30S subunit. Functionally, with S5 and S12 plays an important role in translational accuracy. This Azotobacter vinelandii (strain DJ / ATCC BAA-1303) protein is Small ribosomal subunit protein uS4.